A 245-amino-acid chain; its full sequence is tRNA (guanine-N(1)-)-methyltransferase (245 aa).

S-adenosyl-L-methionine-binding positions include G114 and 133 to 138; that span reads LGDFVI.

It belongs to the RNA methyltransferase TrmD family. As to quaternary structure, homodimer.

Its subcellular location is the cytoplasm. The enzyme catalyses guanosine(37) in tRNA + S-adenosyl-L-methionine = N(1)-methylguanosine(37) in tRNA + S-adenosyl-L-homocysteine + H(+). Specifically methylates guanosine-37 in various tRNAs. The polypeptide is tRNA (guanine-N(1)-)-methyltransferase (Pediococcus pentosaceus (strain ATCC 25745 / CCUG 21536 / LMG 10740 / 183-1w)).